Consider the following 684-residue polypeptide: Methionine--tRNA ligase (684 aa).

The 'HIGH' region signature appears at 14–24 (PYANGAIHLGH). Residues cysteine 145, cysteine 148, cysteine 158, and cysteine 161 each contribute to the Zn(2+) site. A 'KMSKS' region motif is present at residues 330 to 334 (KMSKS). Residue lysine 333 participates in ATP binding. Residues 582 to 684 (DFAKLDLRVA…CGIRPGMQVK (103 aa)) form the tRNA-binding domain.

The protein belongs to the class-I aminoacyl-tRNA synthetase family. MetG type 1 subfamily. In terms of assembly, homodimer. Zn(2+) is required as a cofactor.

The protein localises to the cytoplasm. It catalyses the reaction tRNA(Met) + L-methionine + ATP = L-methionyl-tRNA(Met) + AMP + diphosphate. Is required not only for elongation of protein synthesis but also for the initiation of all mRNA translation through initiator tRNA(fMet) aminoacylation. This is Methionine--tRNA ligase from Haemophilus ducreyi (strain 35000HP / ATCC 700724).